A 360-amino-acid polypeptide reads, in one-letter code: Putative beta-glucosidase 15 (360 aa).

Composition is skewed to basic and acidic residues over residues 1–11 (MARRRMGEEGK) and 47–67 (GRREEDDAGGREKGEKRERKG). 2 disordered regions span residues 1 to 21 (MARRRMGEEGKGGGWGLNGRQ) and 35 to 103 (GWRS…RAER). The segment covering 75-86 (GKRRRERRRGGR) has biased composition (basic residues). A beta-D-glucoside is bound at residue Tyr183. A disulfide bond links Cys191 and Cys196. Residues Glu254, Trp301, 308 to 309 (EW), and Phe317 each bind a beta-D-glucoside. Residue Glu254 is the Nucleophile of the active site. Residue Asn346 is glycosylated (N-linked (GlcNAc...) asparagine).

The protein belongs to the glycosyl hydrolase 1 family.

The catalysed reaction is Hydrolysis of terminal, non-reducing beta-D-glucosyl residues with release of beta-D-glucose.. The protein is Putative beta-glucosidase 15 (BGLU15) of Oryza sativa subsp. japonica (Rice).